The sequence spans 154 residues: RING finger protein 11 (154 aa).

Over residues 1 to 12 (MGNCLKSPTSDD) the composition is skewed to polar residues. The segment at 1 to 53 (MGNCLKSPTSDDISLLHESQSDRASFGEGTEPDQEPPPPYQEQVPVPVYHPTP) is disordered. A lipid anchor (N-myristoyl glycine) is attached at G2. C4 carries the S-palmitoyl cysteine lipid modification. Phosphoserine occurs at positions 14 and 25. The short motif at 37-40 (PPPY) is the PPxY motif element. Residues 41–51 (QEQVPVPVYHP) show a composition bias toward low complexity. Residues 99-140 (CVICMMDFVYGDPIRFLPCMHIYHLDCIDDWLMRSFTCPSCM) form an RING-type zinc finger. T135 is subject to Phosphothreonine; by PKB/AKT1.

As to quaternary structure, interacts (when phosphorylated) with 14-3-3. Interacts with the E3 ubiquitin-ligases NEDD4, ITCH, SMURF2 and WWP1. Also interacts with the E2 ubiquitin-conjugating enzymes UBE2D1 and UBE2N, but neither with CDC34, nor with UBE2L3. Interacts with ZNF350, EPS15 and STAMBP. After TNF stimulation, interacts with TAX1BP1, TNFAIP3 and RIPK1; these interactions are transient and they are lost after 1 hour of stimulation with TNF. Interacts with GGA1. Post-translationally, ubiquitinated in the presence of ITCH, SMURF2 and UBE2D1, as well as WWP1. Phosphorylation by PKB/AKT1 may accelerate degradation by the proteasome. In terms of processing, acylation at both Gly-2 and Cys-4 is required for proper localization to the endosomes.

The protein localises to the early endosome. It localises to the recycling endosome. It is found in the cytoplasm. The protein resides in the nucleus. In terms of biological role, essential component of a ubiquitin-editing protein complex, comprising also TNFAIP3, ITCH and TAX1BP1, that ensures the transient nature of inflammatory signaling pathways. Promotes the association of TNFAIP3 to RIPK1 after TNF stimulation. TNFAIP3 deubiquitinates 'Lys-63' polyubiquitin chains on RIPK1 and catalyzes the formation of 'Lys-48'-polyubiquitin chains. This leads to RIPK1 proteasomal degradation and consequently termination of the TNF- or LPS-mediated activation of NF-kappa-B. Recruits STAMBP to the E3 ubiquitin-ligase SMURF2 for ubiquitination, leading to its degradation by the 26S proteasome. The polypeptide is RING finger protein 11 (RNF11) (Bos taurus (Bovine)).